Reading from the N-terminus, the 1483-residue chain is Chromosome partition protein MukB (1483 aa).

Residue 34 to 41 (GGNGAGKS) participates in ATP binding. Coiled-coil stretches lie at residues 311-426 (EMAR…LQRA) and 547-607 (GQQV…WLAA). The interval 666-783 (PGGSEDARLN…KVPLFGRAAR (118 aa)) is flexible hinge. Coiled-coil stretches lie at residues 835–1115 (EAAL…SAKA) and 1206–1266 (DDPV…QAVS). The interval 850-870 (RELNNHESENQQQRQQYEQAK) is disordered.

This sequence belongs to the SMC family. MukB subfamily. As to quaternary structure, homodimerization via its hinge domain. Binds to DNA via its C-terminal region. Interacts, and probably forms a ternary complex, with MukE and MukF via its C-terminal region. The complex formation is stimulated by calcium or magnesium. Interacts with tubulin-related protein FtsZ.

Its subcellular location is the cytoplasm. It localises to the nucleoid. In terms of biological role, plays a central role in chromosome condensation, segregation and cell cycle progression. Functions as a homodimer, which is essential for chromosome partition. Involved in negative DNA supercoiling in vivo, and by this means organize and compact chromosomes. May achieve or facilitate chromosome segregation by condensation DNA from both sides of a centrally located replisome during cell division. In Erwinia tasmaniensis (strain DSM 17950 / CFBP 7177 / CIP 109463 / NCPPB 4357 / Et1/99), this protein is Chromosome partition protein MukB.